The primary structure comprises 904 residues: Protein abrupt (904 aa).

Polar residues predominate over residues 1–15 (MTESTQLQTAENNNA). 2 disordered regions span residues 1 to 30 (MTESTQLQTAENNNAGVVKMEPPPPATSSV) and 53 to 72 (GSALSPATPPPSLNLSHQQQ). Residues 103–168 (VDVTLACDER…MYNGEVNVSH (66 aa)) enclose the BTB domain. Positions 204–238 (SHNSSNNNNNNSSSNNSLSNNNNNNNNNAESSNHN) are enriched in low complexity. Disordered stretches follow at residues 204-287 (SHNS…LNSP), 349-390 (ASSA…PPPQ), 411-438 (LLDREFPVAGQHPLTRNRSGRDTSKDRE), and 451-501 (ALEN…NQRS). Polar residues predominate over residues 239–253 (KISSYLSPNQTSAAC). The span at 254–286 (NNSSNSNSNNHSSSHNNSSSNNISGSLNSSLNS) shows a compositional bias: low complexity. Positions 429-438 (SGRDTSKDRE) are enriched in basic and acidic residues. Over residues 452–461 (LENSNGQQAN) the composition is skewed to polar residues. At Ser-474 the chain carries Phosphoserine. Over residues 481 to 500 (PSDRGDGQHDGTLDGIDNQR) the composition is skewed to basic and acidic residues. 2 C2H2-type zinc fingers span residues 544 to 567 (RPCPKCGKIYRSAHTLRTHLEDKH) and 573 to 596 (YRCVLCGTVAKSRNSLHSHMSRQH). 2 disordered regions span residues 633-696 (ELRA…GGSS) and 832-904 (AAGN…VHNT). Over residues 642–655 (GGSGSSGGGGGGGS) the composition is skewed to gly residues. Positions 671-682 (DDAEDSDDDPED) are enriched in acidic residues. Phosphoserine is present on residues Ser-837, Ser-846, and Ser-868. Residues 851–868 (MGHDEMAENDGDMRREGS) show a composition bias toward basic and acidic residues. Polar residues predominate over residues 876 to 886 (DNNQSGSNHEV). Ser-889 and Ser-896 each carry phosphoserine.

Expressed in CNS midline cells during embryonic stages 9-13. Expression also seen in cells of the stomagastric nervous system. Segmentally repeated stripes of ectodermal expression appear at stage 11 that become uniform by stage 12 and throughout embryogenesis. Expressed at variable levels in somatic muscles from stage 16 and in all imaginal disks during larval development. Expression is seen in da neurons that grow in two-dimensional dendrites underneath the epidermis during late embryonic, larval, and pupal stages.

The protein localises to the nucleus. Its function is as follows. Expression is vital for development; may be involved in transcriptional regulation. In embryos, muscle specific expression is required for segmental nerve b (SNb) motoneuron target recognition within ventral longitudinal muscles. Has a role in establishing and maintaining embryonic muscle attachments, adult sensory cell formation (macrochaetae) and morphogenesis of adult appendages (legs, antenna aristae and male external genitalia). Has a role in the morphogenesis of the class I dendritic neurons: selective expression of ab in class I da neurons plays a pivotal role in forming dendritic arbors, which are characteristic of the class I cells. The development of more complex arbors of class II-IV neurons depends on the absence of ab. This is Protein abrupt (ab) from Drosophila melanogaster (Fruit fly).